The following is a 694-amino-acid chain: Elongation factor G (694 aa).

A tr-type G domain is found at 8–282; that stretch reads DRLRNIGIMA…AIVDYLPSPL (275 aa). GTP-binding positions include 17–24, 81–85, and 135–138; these read AHIDAGKT, DTPGH, and NKMD. Residues 284–303 form a disordered region; it reads IPPVQGTDPETGEPAERKAD.

Belongs to the TRAFAC class translation factor GTPase superfamily. Classic translation factor GTPase family. EF-G/EF-2 subfamily.

It localises to the cytoplasm. In terms of biological role, catalyzes the GTP-dependent ribosomal translocation step during translation elongation. During this step, the ribosome changes from the pre-translocational (PRE) to the post-translocational (POST) state as the newly formed A-site-bound peptidyl-tRNA and P-site-bound deacylated tRNA move to the P and E sites, respectively. Catalyzes the coordinated movement of the two tRNA molecules, the mRNA and conformational changes in the ribosome. This is Elongation factor G from Symbiobacterium thermophilum (strain DSM 24528 / JCM 14929 / IAM 14863 / T).